The sequence spans 88 residues: Cell division topological specificity factor (88 aa).

The protein belongs to the MinE family.

In terms of biological role, prevents the cell division inhibition by proteins MinC and MinD at internal division sites while permitting inhibition at polar sites. This ensures cell division at the proper site by restricting the formation of a division septum at the midpoint of the long axis of the cell. In Psychromonas ingrahamii (strain DSM 17664 / CCUG 51855 / 37), this protein is Cell division topological specificity factor.